Consider the following 351-residue polypeptide: MASPSTDRLHLIEYLQDPGNPDGESRERLIEACQDVIASLERPIETARKQAFLTLDHAVIRSAIKLNLFKALDKEDRPYSTQELALATTPQCNHVLLSRLLRYLATRPLRLVIETSAGFWQRTARGSVFAQDSFKSGCSMYFDACGPAFQALPTWICTPDHERLHSPFQVAYPGQGSFFKRLQEDDSMLQTFQCWMETVSRHQFCAQETIDFNEWIPDGTSDSDVVFVDVGGGTGDQAIALGYKRIGLPGRIINQDLLPISQEAEEMLRSHNIERITYNFFDEQPLKGACVYHYRQIFHDWPDADCERILRRAKDSMTASSTLLIDEVVLPETGAHWMNDHKYNGVACYST.

S-adenosyl-L-methionine is bound by residues 231–232 (GG), 279–280 (NF), and arginine 295. The Proton acceptor role is filled by histidine 299.

This sequence belongs to the class I-like SAM-binding methyltransferase superfamily. Cation-independent O-methyltransferase family.

It participates in secondary metabolite biosynthesis. Functionally, O-methyltransferase; part of the gene cluster that mediates the biosynthesis of the cyclic tetrapeptide apicidin F (APF). The non-ribosomal peptide synthetase apf1 incorporates four different amino acids to produce apicidin F: L-phenylalanine, D-pipecolic acid (D-pip), N-methoxy-L-tryptophan and L-2-aminooctanedioic acid. L-Phenylalanine is the only proteinogenic amino acid directly used by apf1. The 3 other apf1 substrates are non-proteinogenic and have to be modified by other enzymes of the cluster. Lysine is converted to delta-1-pyrroline-5-carboxylate (P5C) which is reduced to L-pipecolic acid (L-pip) by apf3. L-pip is epimerized to D-pip, probably by apf1 activity, prior to incorporation. L-Tryptophan is N-oxidyzed by one of the cytochrome P450 monooxygenases (apf7 or apf8), and further methylated at the hydroxy group by the O-methyltransferase apf6 to yield N-methoxy-L-tryptophan. The synthesis of the fourth apf1 substrate is more complex. The fatty acid synthase apf5 is involved in the synthesis of the octanoic acid backbone of L-2-aminooctanedioic acid by fixing one acetyl-CoA unit and three malonyl-CoA units. Then one of the cytochrome P450 monooxygenases (apf7 or apf8) may oxidize this backbone to 2-oxooctanoic acid. The aminotransferase apf4 is predicted to catalyze the exchange of the keto group with an amino group. The next step would be the oxidation of 2-aminooctanoic acid by one of the cytochrome P450 monooxygenases (apf7 or apf8). The last step is the oxidation of 2-amino-8-hydroxyoctanoic acid to 2-aminooctanedioic acid is catalyzed by the FAD-dependent monooxygenase apf9. This chain is O-methyltransferase apf6, found in Gibberella fujikuroi (strain CBS 195.34 / IMI 58289 / NRRL A-6831) (Bakanae and foot rot disease fungus).